An 843-amino-acid polypeptide reads, in one-letter code: Glycogen phosphorylase, muscle form (843 aa).

Serine 2 bears the N-acetylserine mark. The residue at position 15 (serine 15) is a Phosphoserine; by PHK; in form phosphorylase A. Positions 43 and 76 each coordinate AMP. Tyrosine 204 and tyrosine 227 each carry phosphotyrosine. An AMP-binding site is contributed by arginine 310–cysteine 319. Residue serine 430 is modified to Phosphoserine. Tyrosine 473 carries the phosphotyrosine modification. Serine 514 carries the phosphoserine modification. Residue lysine 681 is modified to N6-(pyridoxal phosphate)lysine. 2 positions are modified to phosphoserine: serine 747 and serine 748.

This sequence belongs to the glycogen phosphorylase family. As to quaternary structure, homodimer. Homotetramer; to form the enzymatically active phosphorylase A. The cofactor is pyridoxal 5'-phosphate. In terms of processing, phosphorylation of Ser-15 converts phosphorylase B (unphosphorylated) to phosphorylase A.

It carries out the reaction [(1-&gt;4)-alpha-D-glucosyl](n) + phosphate = [(1-&gt;4)-alpha-D-glucosyl](n-1) + alpha-D-glucose 1-phosphate. Its activity is regulated as follows. Allosterically regulated through the non-covalent binding of metabolites, being activated by AMP and inhibited by ATP, ADP, and glucose-6-phosphate. The activity is also controlled by post-translational modifications including phosphorylation. Its function is as follows. Allosteric enzyme that catalyzes the rate-limiting step in glycogen catabolism, the phosphorolytic cleavage of glycogen to produce glucose-1-phosphate, and plays a central role in maintaining cellular and organismal glucose homeostasis. The protein is Glycogen phosphorylase, muscle form of Oryctolagus cuniculus (Rabbit).